The chain runs to 925 residues: Probable dipeptidyl-aminopeptidase B (925 aa).

A disordered region spans residues 1–104; sequence MTPYRDVPPV…RHAQKKGPGM (104 aa). Residues 1-110 are Cytoplasmic-facing; sequence MTPYRDVPPV…GPGMDRGMRR (110 aa). Low complexity predominate over residues 31 to 40; the sequence is ESGSSVSTTS. Over residues 55–72 the composition is skewed to basic and acidic residues; sequence LSEKQPRGDDNEDALKDE. A helical; Signal-anchor for type II membrane protein transmembrane segment spans residues 111 to 131; the sequence is ALLIAAGLLVSAWVAGLFVYI. At 132–925 the chain is on the vacuolar side; the sequence is ATKSYKPASA…PKPNGKRRAA (794 aa). Asparagine 369 carries N-linked (GlcNAc...) asparagine glycosylation. Serine 773 functions as the Charge relay system in the catalytic mechanism. N-linked (GlcNAc...) asparagine glycosylation occurs at asparagine 832. Catalysis depends on charge relay system residues aspartate 850 and histidine 883.

The protein belongs to the peptidase S9B family.

The protein localises to the vacuole membrane. It carries out the reaction Release of an N-terminal dipeptide, Xaa-Yaa-|-Zaa-, from a polypeptide, preferentially when Yaa is Pro, provided Zaa is neither Pro nor hydroxyproline.. In terms of biological role, type IV dipeptidyl-peptidase which removes N-terminal dipeptides sequentially from polypeptides having unsubstituted N-termini provided that the penultimate residue is proline. This is Probable dipeptidyl-aminopeptidase B (DAPB) from Chaetomium globosum (strain ATCC 6205 / CBS 148.51 / DSM 1962 / NBRC 6347 / NRRL 1970) (Soil fungus).